Consider the following 498-residue polypeptide: Cytochrome P450 monooxygenase astB (498 aa).

A helical transmembrane segment spans residues phenylalanine 7–threonine 27. Residues asparagine 237, asparagine 248, and asparagine 346 are each glycosylated (N-linked (GlcNAc...) asparagine). Cysteine 425 is a heme binding site.

The protein belongs to the cytochrome P450 family. Requires heme as cofactor.

It is found in the membrane. The enzyme catalyses preasperterpenoid A + 4 reduced [NADPH--hemoprotein reductase] + 4 O2 = asperterpenoid A + 4 oxidized [NADPH--hemoprotein reductase] + 5 H2O + 5 H(+). It carries out the reaction asperterpenoid A + 2 reduced [NADPH--hemoprotein reductase] + 2 O2 = asperterpenoid B + 2 oxidized [NADPH--hemoprotein reductase] + 3 H2O + 3 H(+). Its pathway is secondary metabolite biosynthesis; terpenoid biosynthesis. Functionally, cytochrome P450 monooxygenase; part of the gene cluster that mediates the biosynthesis of the asperterpenoids, sesterterpenes that exhibit anti-tuberculosis activity. The first step of the pathway is performed by the sesterterpene synthase astC that possesses both prenyl transferase and terpene cyclase activity, converting isopentenyl diphosphate and dimethylallyl diphosphate into geranylfarnesyl diphosphate (GFPP) and further converting GFPP into preasperterpenoid A, respectively. The cytochrome P450 monooxygenase astB then dually oxidizes preasperterpenoid A to produce asperterpenoid A along with a minor product, asperterpenoid B. Finally, the cytochrome P450 monooxygenase astA converts asperterpenoid A into asperterpenoid C. The polypeptide is Cytochrome P450 monooxygenase astB (Talaromyces wortmannii (Penicillium wortmannii)).